We begin with the raw amino-acid sequence, 2210 residues long: RNA-directed RNA polymerase L (2210 aa).

The interval Lys-26–Ser-285 is endonuclease. Mn(2+)-binding residues include Glu-51, Asp-88, and Glu-101. Lys-114 is an active-site residue. In terms of domain architecture, RdRp catalytic spans Leu-1163–Val-1359. Asp-1319 provides a ligand contact to Mg(2+).

This sequence belongs to the Bunyavirales RNA polymerase family. In terms of assembly, homomultimer; the oligomeric structure is essential for the polymerase activity. Interacts with nucleoprotein N. Interacts with protein Z; this interaction inhibits viral transcription and replication, Z partially blocks the product exit tunnel for the releasing nascent RNA product. It depends on Mn(2+) as a cofactor. Requires Mg(2+) as cofactor.

The protein resides in the virion. It is found in the host cytoplasm. The catalysed reaction is RNA(n) + a ribonucleoside 5'-triphosphate = RNA(n+1) + diphosphate. Functionally, RNA-dependent RNA polymerase, which is responsible for the replication and transcription of the viral RNA genome using antigenomic RNA as an intermediate. During transcription, synthesizes subgenomic RNAs and assures their capping by a cap-snatching mechanism, which involves the endonuclease activity cleaving the host capped pre-mRNAs. These short capped RNAs are then used as primers for viral transcription. The 3'-end of subgenomic mRNAs molecules are heterogeneous and not polyadenylated. The replicase function is to direct synthesis of antigenomic and genomic RNA which are encapsidated and non capped. As a consequence of the use of the same enzyme for both transcription and replication, these mechanisms need to be well coordinated. These processes may be regulated by proteins N and Z in a dose-dependent manner. Z protein inhibits the viral polymerase L und thus the viral transcription and RNA synthesis. The chain is RNA-directed RNA polymerase L from Sigmodon alstoni (PIRV).